Reading from the N-terminus, the 226-residue chain is 3-dehydroquinate dehydratase (226 aa).

Residues 33–35 (ELR) and R65 each bind 3-dehydroquinate. H120 functions as the Proton donor/acceptor in the catalytic mechanism. Catalysis depends on K147, which acts as the Schiff-base intermediate with substrate. The 3-dehydroquinate site is built by R186, S205, and Q209.

Belongs to the type-I 3-dehydroquinase family. Homodimer.

The catalysed reaction is 3-dehydroquinate = 3-dehydroshikimate + H2O. It functions in the pathway metabolic intermediate biosynthesis; chorismate biosynthesis; chorismate from D-erythrose 4-phosphate and phosphoenolpyruvate: step 3/7. Functionally, involved in the third step of the chorismate pathway, which leads to the biosynthesis of aromatic amino acids. Catalyzes the cis-dehydration of 3-dehydroquinate (DHQ) and introduces the first double bond of the aromatic ring to yield 3-dehydroshikimate. This Thermodesulfovibrio yellowstonii (strain ATCC 51303 / DSM 11347 / YP87) protein is 3-dehydroquinate dehydratase.